A 634-amino-acid chain; its full sequence is 1-deoxy-D-xylulose-5-phosphate synthase (634 aa).

Residues His74 and 115–117 (AHS) contribute to the thiamine diphosphate site. Asp146 contacts Mg(2+). Thiamine diphosphate-binding positions include 147–148 (GA), Asn176, Tyr283, and Glu365. Asn176 lines the Mg(2+) pocket.

This sequence belongs to the transketolase family. DXPS subfamily. In terms of assembly, homodimer. Mg(2+) is required as a cofactor. Requires thiamine diphosphate as cofactor.

It catalyses the reaction D-glyceraldehyde 3-phosphate + pyruvate + H(+) = 1-deoxy-D-xylulose 5-phosphate + CO2. Its pathway is metabolic intermediate biosynthesis; 1-deoxy-D-xylulose 5-phosphate biosynthesis; 1-deoxy-D-xylulose 5-phosphate from D-glyceraldehyde 3-phosphate and pyruvate: step 1/1. Catalyzes the acyloin condensation reaction between C atoms 2 and 3 of pyruvate and glyceraldehyde 3-phosphate to yield 1-deoxy-D-xylulose-5-phosphate (DXP). The protein is 1-deoxy-D-xylulose-5-phosphate synthase of Burkholderia lata (strain ATCC 17760 / DSM 23089 / LMG 22485 / NCIMB 9086 / R18194 / 383).